Reading from the N-terminus, the 282-residue chain is DNA-dependent metalloprotease WSS1 homolog 2 (282 aa).

In terms of domain architecture, Ubiquitin-like spans 1–75 (MELKFSCRGN…CLIRQDKDIV (75 aa)). A WLM domain is found at 99–274 (PHTTPKPASI…LLAAAERRKQ (176 aa)). H202 is a Zn(2+) binding site. Residue E203 is part of the active site. The Zn(2+) site is built by H206 and H212. Residues 234 to 282 (GKPGSYVSDRASYTPQQDNDDEDQKNHRRDLLLAAAERRKQSGSKVQKE) form a disordered region. Over residues 269–282 (AERRKQSGSKVQKE) the composition is skewed to basic and acidic residues.

Belongs to the peptidase M3 family. WSS1-like metalloprotease (WLM) subfamily. It depends on Zn(2+) as a cofactor.

The protein localises to the cytoplasm. Its subcellular location is the nucleus. Its function is as follows. Metalloendopeptidase that acts selectively on DNA-binding proteins. DNA is needed to bring the protease and substrates together to enable proteolysis. Involved in the repair of toxic DNA-protein cross-links (DPCs) such as covalently trapped topoisomerase 1 (TOP1) adducts on DNA lesions or DPCs induced by reactive compounds such as formaldehyde. This is DNA-dependent metalloprotease WSS1 homolog 2 from Schizosaccharomyces pombe (strain 972 / ATCC 24843) (Fission yeast).